A 236-amino-acid chain; its full sequence is Leucyl/phenylalanyl-tRNA--protein transferase (236 aa).

The protein belongs to the L/F-transferase family.

The protein resides in the cytoplasm. It catalyses the reaction N-terminal L-lysyl-[protein] + L-leucyl-tRNA(Leu) = N-terminal L-leucyl-L-lysyl-[protein] + tRNA(Leu) + H(+). The catalysed reaction is N-terminal L-arginyl-[protein] + L-leucyl-tRNA(Leu) = N-terminal L-leucyl-L-arginyl-[protein] + tRNA(Leu) + H(+). It carries out the reaction L-phenylalanyl-tRNA(Phe) + an N-terminal L-alpha-aminoacyl-[protein] = an N-terminal L-phenylalanyl-L-alpha-aminoacyl-[protein] + tRNA(Phe). Functions in the N-end rule pathway of protein degradation where it conjugates Leu, Phe and, less efficiently, Met from aminoacyl-tRNAs to the N-termini of proteins containing an N-terminal arginine or lysine. The polypeptide is Leucyl/phenylalanyl-tRNA--protein transferase (Nitrosomonas europaea (strain ATCC 19718 / CIP 103999 / KCTC 2705 / NBRC 14298)).